We begin with the raw amino-acid sequence, 502 residues long: UPF0371 protein CLB_0371 (502 aa).

It belongs to the UPF0371 family.

This chain is UPF0371 protein CLB_0371, found in Clostridium botulinum (strain ATCC 19397 / Type A).